Reading from the N-terminus, the 78-residue chain is Vacuolar ATPase assembly integral membrane protein VMA21 (78 aa).

Over methionine 1–valine 14 the chain is Cytoplasmic. The helical transmembrane segment at phenylalanine 15–phenylalanine 35 threads the bilayer. The Lumenal segment spans residues serine 36–asparagine 38. A helical membrane pass occupies residues alanine 39 to valine 59. Residues alanine 60–arginine 78 are Cytoplasmic-facing. A Prevents secretion from ER motif is present at residues lysine 75–arginine 78.

This sequence belongs to the VMA21 family.

It is found in the endoplasmic reticulum membrane. It localises to the endoplasmic reticulum-Golgi intermediate compartment membrane. The protein resides in the cytoplasmic vesicle. The protein localises to the COPII-coated vesicle membrane. Functionally, required for the assembly of the V0 complex of the vacuolar ATPase (V-ATPase) in the endoplasmic reticulum. The polypeptide is Vacuolar ATPase assembly integral membrane protein VMA21 (Debaryomyces hansenii (strain ATCC 36239 / CBS 767 / BCRC 21394 / JCM 1990 / NBRC 0083 / IGC 2968) (Yeast)).